A 408-amino-acid polypeptide reads, in one-letter code: Glutamate N-acetyltransferase (408 aa).

Substrate-binding residues include threonine 150, lysine 176, threonine 189, glutamate 271, asparagine 403, and threonine 408. Threonine 189 acts as the Nucleophile in catalysis.

It belongs to the ArgJ family. Heterotetramer of two alpha and two beta chains.

The protein resides in the cytoplasm. It catalyses the reaction N(2)-acetyl-L-ornithine + L-glutamate = N-acetyl-L-glutamate + L-ornithine. It functions in the pathway amino-acid biosynthesis; L-arginine biosynthesis; L-ornithine and N-acetyl-L-glutamate from L-glutamate and N(2)-acetyl-L-ornithine (cyclic): step 1/1. Its function is as follows. Catalyzes the transfer of the acetyl group from N(2)-acetylornithine to glutamate, forming N-acetylglutamate and L-ornithine. This Methanococcus maripaludis (strain DSM 14266 / JCM 13030 / NBRC 101832 / S2 / LL) protein is Glutamate N-acetyltransferase.